The sequence spans 309 residues: Porphobilinogen deaminase (309 aa).

At C241 the chain carries S-(dipyrrolylmethanemethyl)cysteine.

This sequence belongs to the HMBS family. Monomer. Dipyrromethane serves as cofactor.

The enzyme catalyses 4 porphobilinogen + H2O = hydroxymethylbilane + 4 NH4(+). Its pathway is porphyrin-containing compound metabolism; protoporphyrin-IX biosynthesis; coproporphyrinogen-III from 5-aminolevulinate: step 2/4. Functionally, tetrapolymerization of the monopyrrole PBG into the hydroxymethylbilane pre-uroporphyrinogen in several discrete steps. The chain is Porphobilinogen deaminase from Bacillus mycoides (strain KBAB4) (Bacillus weihenstephanensis).